A 478-amino-acid polypeptide reads, in one-letter code: Chromosomal replication initiator protein DnaA (478 aa).

The tract at residues 1–82 is domain I, interacts with DnaA modulators; the sequence is MHTMNKTAES…ELGKNAKLLY (82 aa). Residues 82-140 are domain II; the sequence is YKIKMENTYGNKLPFTEQLPSAHRSPVRTQEIDVPVQQKNPELRNPFIIPGIRNLKIES. The domain III, AAA+ region stretch occupies residues 141 to 358; sequence QLNANYSFDN…GAIISLIAQS (218 aa). 4 residues coordinate ATP: Gly-186, Gly-188, Lys-189, and Thr-190. Positions 359 to 478 are domain IV, binds dsDNA; it reads SFNKKEVTLE…VDDINKKLSL (120 aa).

It belongs to the DnaA family. As to quaternary structure, oligomerizes as a right-handed, spiral filament on DNA at oriC.

The protein resides in the cytoplasm. In terms of biological role, plays an essential role in the initiation and regulation of chromosomal replication. ATP-DnaA binds to the origin of replication (oriC) to initiate formation of the DNA replication initiation complex once per cell cycle. Binds the DnaA box (a 9 base pair repeat at the origin) and separates the double-stranded (ds)DNA. Forms a right-handed helical filament on oriC DNA; dsDNA binds to the exterior of the filament while single-stranded (ss)DNA is stabiized in the filament's interior. The ATP-DnaA-oriC complex binds and stabilizes one strand of the AT-rich DNA unwinding element (DUE), permitting loading of DNA polymerase. After initiation quickly degrades to an ADP-DnaA complex that is not apt for DNA replication. Binds acidic phospholipids. The polypeptide is Chromosomal replication initiator protein DnaA (Flavobacterium psychrophilum (strain ATCC 49511 / DSM 21280 / CIP 103535 / JIP02/86)).